The sequence spans 172 residues: C-phycocyanin beta chain (172 aa).

The residue at position 72 (asparagine 72) is an N4-methylasparagine. The (2R,3E)-phycocyanobilin site is built by cysteine 82 and cysteine 153.

The protein belongs to the phycobiliprotein family. In terms of assembly, heterodimer of an alpha and a beta subunit, which further assembles into trimers and the trimers into hexamers. The basic functional unit of phycobiliproteins is a ring-shaped hexamer formed from two back-to-back trimers contacting via the alpha chain subunits. The trimers are composed of alpha/beta subunit heterodimers arranged around a three-fold axis of symmetry. The phycoerythrins also contain a gamma subunit which is located in the center of the hexamer. Contains two covalently linked bilin chromophores.

It localises to the plastid. The protein localises to the chloroplast thylakoid membrane. Its function is as follows. Light-harvesting photosynthetic bile pigment-protein from the phycobiliprotein complex (phycobilisome, PBS). Phycocyanin is the major phycobiliprotein in the PBS rod. The sequence is that of C-phycocyanin beta chain (cpcB) from Rhodella violacea (Red alga).